The primary structure comprises 217 residues: Glutathione S-transferase 1 (217 aa).

The region spanning Met-1 to Asp-83 is the GST N-terminal domain. Glutathione is bound by residues Ser-11, His-53 to Val-55, and Asp-67 to His-69. Residues Asp-89 to Leu-211 form the GST C-terminal domain.

This sequence belongs to the GST superfamily. Theta family. As to quaternary structure, homodimer.

It catalyses the reaction RX + glutathione = an S-substituted glutathione + a halide anion + H(+). Conjugation of reduced glutathione to a wide number of exogenous and endogenous hydrophobic electrophiles. The sequence is that of Glutathione S-transferase 1 (GST1) from Manduca sexta (Tobacco hawkmoth).